The chain runs to 484 residues: 6-phosphogluconate dehydrogenase, decarboxylating (484 aa).

NADP(+)-binding positions include 11–16 (GLAVMG), 34–36 (NRT), 76–78 (VRA), and N104. Residues N104 and 130–132 (SGG) contribute to the substrate site. Residue K185 is the Proton acceptor of the active site. 188-189 (HN) contacts substrate. Residue E192 is the Proton donor of the active site. Residues Y193, K262, R289, R447, and H453 each coordinate substrate.

This sequence belongs to the 6-phosphogluconate dehydrogenase family. In terms of assembly, homodimer.

It catalyses the reaction 6-phospho-D-gluconate + NADP(+) = D-ribulose 5-phosphate + CO2 + NADPH. It functions in the pathway carbohydrate degradation; pentose phosphate pathway; D-ribulose 5-phosphate from D-glucose 6-phosphate (oxidative stage): step 3/3. Functionally, catalyzes the oxidative decarboxylation of 6-phosphogluconate to ribulose 5-phosphate and CO(2), with concomitant reduction of NADP to NADPH. This chain is 6-phosphogluconate dehydrogenase, decarboxylating (gnd), found in Haemophilus ducreyi (strain 35000HP / ATCC 700724).